The sequence spans 435 residues: rRNA methyltransferase 3A, mitochondrial (435 aa).

A mitochondrion-targeting transit peptide spans 1-42; it reads MAALMYNVSRGLVMLGERSLFQRERYQILVNSRRFLRGLRRR. Residues 314 to 324 show a composition bias toward polar residues; that stretch reads KQLVSGQTENV. Residues 314–351 are disordered; the sequence is KQLVSGQTENVSSDDYSESDSDDDDDEEEDEDSLPHVK. Residues 328–345 are compositionally biased toward acidic residues; sequence DYSESDSDDDDDEEEDED. 2 residues coordinate S-adenosyl-L-methionine: G369 and L402.

The protein belongs to the class IV-like SAM-binding methyltransferase superfamily. RNA methyltransferase TrmH family.

The protein resides in the mitochondrion. The catalysed reaction is a uridine in rRNA + S-adenosyl-L-methionine = a 2'-O-methyluridine in rRNA + S-adenosyl-L-homocysteine + H(+). Functionally, S-adenosyl-L-methionine-dependent 2'-O-ribose methyltransferase that catalyzes the formation of 2'-O-methylguanosine at position 1485 (Gm1485) in the mitochondrial large subunit ribosomal RNA (mtLSU rRNA), a conserved modification in the peptidyl transferase domain of the mtLSU rRNA. Also required for formation of 2'-O-methyluridine at position 1484 (Um1484) mediated by MRM2. The protein is rRNA methyltransferase 3A, mitochondrial (mrm3a) of Danio rerio (Zebrafish).